A 119-amino-acid chain; its full sequence is MORF4 family associated protein 1 like 2 (119 aa).

A compositionally biased stretch (basic and acidic residues) spans 1 to 16; it reads MRPVDADEAREPREEP. Residues 1–36 are disordered; sequence MRPVDADEAREPREEPGSPLSPAPRAGRENLASLER.

Belongs to the MORF4 family-associated protein family. In terms of assembly, may interact with CDK2AP1.

Functionally, may play a role in cell proliferation. The chain is MORF4 family associated protein 1 like 2 from Homo sapiens (Human).